Consider the following 438-residue polypeptide: MPKLQGFEFWSRALGGARHVVAPMVDQSELAWRLLSRRHGAQLCYTPMLHAQVFVRDANYRKENLYCDVCPEDRPLIVQFCANDPEVFVQAALLAQDYCDAIDLNLGCPQMIAKRGRYGAFLQEEWDLLQRMILLAHERLSVPVTCKIRVFPEIDKTVRYAQMLEKAGCQLLTVHGRTKEQKGPMAGTASWEHIKAVRKAVGIPVFANGNIRCLQDVERCIQDTGVQGVMSAEGNLHNPALFEGRSPAVWELADEYLDIVRQHPCPLSYVRAHLFKLWHHTLQVHQQLREELAKVKTLEGVAAVSQALKLRCQEDMARQQEGVRPADNLPAFHWICQPYIRPGPKEGSKENSSGRSKRALEEEEGSMEGLSKNKLKKQLRNPHKTFDPSLKPKYAKCDQCGNPKGNRCVFNLCRGCCKKRAFRETADCPGHDCFLRPN.

Residues 23–25 (PMV) and Q79 each bind FMN. C108 acts as the Proton donor in catalysis. FMN is bound by residues K147, H175, 208–210 (NGN), and 232–233 (AE). The interval 343–387 (GPKEGSKENSSGRSKRALEEEEGSMEGLSKNKLKKQLRNPHKTFD) is disordered. A compositionally biased stretch (basic residues) spans 373 to 383 (NKLKKQLRNPH).

Belongs to the Dus family. Dus1 subfamily. FMN serves as cofactor.

It is found in the cytoplasm. It localises to the nucleus. It catalyses the reaction 5,6-dihydrouridine(16) in tRNA + NADP(+) = uridine(16) in tRNA + NADPH + H(+). The catalysed reaction is 5,6-dihydrouridine(16) in tRNA + NAD(+) = uridine(16) in tRNA + NADH + H(+). It carries out the reaction 5,6-dihydrouridine(17) in tRNA + NAD(+) = uridine(17) in tRNA + NADH + H(+). The enzyme catalyses 5,6-dihydrouridine(17) in tRNA + NADP(+) = uridine(17) in tRNA + NADPH + H(+). Its function is as follows. Catalyzes the synthesis of dihydrouridine, a modified base found in the D-loop of most tRNAs. Specifically modifies U16 and U17 in cytoplasmic tRNAs. Affects the level of some mature tRNA and thereby the total cellular translation. The chain is tRNA-dihydrouridine(16/17) synthase [NAD(P)(+)]-like (Dus1l) from Rattus norvegicus (Rat).